The following is a 458-amino-acid chain: MAKAPKTAYVCNDCGAEFSRWQGQCSACKAWNTITEVRLISTAKSKNDRFSGYAGETQAKIQTLSEISLQETPRFSSGFSELDRVLGGGIVPGSAILIGGHPGAGKSTLLLQVMCGLAKNMTALYVTGEESLQQVAMRASRLGLPSDQLKMLSETSVEQICNLADQLKPQIIVVDSIQVMHLADIQSSPGSVAQVRECASFLTRYAKTRQVAIIMVGHVTKDGTLAGPKVLEHAIDCSLLLEGEADSRYRTLRSHKNRFGAVNELGVFGMTEQGLREVKNPSAIFLSRGDEITSGSSVMVLWEGTRPLLVEIQALVDHSMLANPRRVAVGLEQNRLALLLAVLHRHGGLQMADQDVFVNVVGGVKVSETSADLALLLALISSFRNRPLPQDLVIFGEVGLAGEIRPVPSGQERISEAAKHGFKRAIVPFGNKPKSAVENMQVFTVKKLTDALAVLDNL.

The C4-type zinc finger occupies 11–28; that stretch reads CNDCGAEFSRWQGQCSAC. 100–107 contributes to the ATP binding site; it reads GHPGAGKS. The RadA KNRFG motif motif lies at 256-260; sequence KNRFG. The segment at 355–458 is lon-protease-like; it reads DVFVNVVGGV…TDALAVLDNL (104 aa).

This sequence belongs to the RecA family. RadA subfamily.

In terms of biological role, DNA-dependent ATPase involved in processing of recombination intermediates, plays a role in repairing DNA breaks. Stimulates the branch migration of RecA-mediated strand transfer reactions, allowing the 3' invading strand to extend heteroduplex DNA faster. Binds ssDNA in the presence of ADP but not other nucleotides, has ATPase activity that is stimulated by ssDNA and various branched DNA structures, but inhibited by SSB. Does not have RecA's homology-searching function. This Haemophilus influenzae (strain ATCC 51907 / DSM 11121 / KW20 / Rd) protein is DNA repair protein RadA.